Reading from the N-terminus, the 108-residue chain is Translation initiation factor 1A (108 aa).

One can recognise an S1-like domain in the interval 11–85; sequence PSKDVPKPEE…TKADIVYRYM (75 aa).

Belongs to the eIF-1A family.

In terms of biological role, seems to be required for maximal rate of protein biosynthesis. Enhances ribosome dissociation into subunits and stabilizes the binding of the initiator Met-tRNA(I) to 40 S ribosomal subunits. This is Translation initiation factor 1A (eIF1A) from Metallosphaera sedula (strain ATCC 51363 / DSM 5348 / JCM 9185 / NBRC 15509 / TH2).